The chain runs to 553 residues: Putative transport protein YidE (553 aa).

5 consecutive transmembrane segments (helical) span residues Ile-4 to Val-24, Gly-28 to Ser-48, Phe-65 to Ser-85, Leu-95 to Phe-115, and Met-158 to Leu-178. 2 RCK C-terminal domains span residues Gln-191–Gln-276 and Asp-279–Asn-361. 6 helical membrane-spanning segments follow: residues Met-371–Val-391, Gly-393–Leu-413, Ile-439–Val-459, Leu-464–Leu-484, Tyr-493–Ala-513, and Leu-533–Gly-553.

It belongs to the AAE transporter (TC 2.A.81) family. YidE subfamily.

The protein localises to the cell membrane. This Escherichia coli O7:K1 (strain IAI39 / ExPEC) protein is Putative transport protein YidE.